Consider the following 614-residue polypeptide: ETS-related transcription factor Elf-1 (614 aa).

Residues Ser110, Ser163, Ser167, and Ser168 each carry the phosphoserine modification. The segment at Thr159 to Lys199 is disordered. The segment covering Lys173 to Pro182 has biased composition (basic residues). Residue Ser187 is modified to Phosphoserine. Thr190 is subject to Phosphothreonine. Residues Ile208–Lys290 constitute a DNA-binding region (ETS). The tract at residues Asp303–Val371 is disordered. The segment covering Ser310–Pro335 has biased composition (low complexity). The residue at position 430 (Ser430) is a Phosphoserine.

Belongs to the ETS family. Binds to the underphosphorylated form of RB. May interact with other transcription factors in order to regulate specific genes. Interacts with RUNX1.

It is found in the nucleus. Functionally, transcription factor that activates the LYN and BLK promoters. This chain is ETS-related transcription factor Elf-1 (ELF1), found in Bos taurus (Bovine).